Reading from the N-terminus, the 299-residue chain is Protease HtpX homolog (299 aa).

Transmembrane regions (helical) follow at residues 7–24 (GILMAVMTALFLGVGALI) and 29–46 (GAIIALIVAALMNLFTFW). Residue His-130 coordinates Zn(2+). Glu-131 is an active-site residue. His-134 contributes to the Zn(2+) binding site. Helical transmembrane passes span 145 to 165 (VTATFAGAISMLANFAFFFGG) and 174 to 194 (PVGIVGTLALMILAPLAAGLV). Zn(2+) is bound at residue Glu-203.

Belongs to the peptidase M48B family. It depends on Zn(2+) as a cofactor.

It localises to the cell inner membrane. The polypeptide is Protease HtpX homolog (Cereibacter sphaeroides (strain ATCC 17025 / ATH 2.4.3) (Rhodobacter sphaeroides)).